A 327-amino-acid chain; its full sequence is Altered inheritance rate of mitochondria protein 25 (327 aa).

The protein belongs to the phospholipid scramblase family.

The protein localises to the mitochondrion. The polypeptide is Altered inheritance rate of mitochondria protein 25 (AIM25) (Saccharomyces cerevisiae (strain ATCC 204508 / S288c) (Baker's yeast)).